The sequence spans 267 residues: Serine/threonine-protein kinase 1 (267 aa).

Positions Ile-18–Leu-266 constitute a Protein kinase domain. Residues Leu-24 to Met-32 and Lys-47 each bind ATP. Catalysis depends on Asp-134, which acts as the Proton acceptor.

Belongs to the protein kinase superfamily. Ser/Thr protein kinase family.

The enzyme catalyses L-seryl-[protein] + ATP = O-phospho-L-seryl-[protein] + ADP + H(+). It catalyses the reaction L-threonyl-[protein] + ATP = O-phospho-L-threonyl-[protein] + ADP + H(+). The polypeptide is Serine/threonine-protein kinase 1 (PK1) (Heliothis zea nuclear polyhedrosis virus (HzSNPV)).